Here is a 3462-residue protein sequence, read N- to C-terminus: DNA-directed RNA polymerase subunit beta'' (3462 aa).

Zn(2+)-binding residues include C263, C335, C342, and C345. The interval 541 to 1085 (KIDDQELSSV…PNKIFSSNLF (545 aa)) is insert-1. Residues 1528-1585 (PQSANERKQILKKARQKLRLFPLNLNEKKNRFSSVTLDLLRDQTTLHKMQSCGEAESG) form an insert-2 region. Positions 1602-1699 (KKITEIFTFC…FSKQMGNRLL (98 aa)) are insert-3. Positions 1938 to 2168 (LKNKMNQSFS…SQASWILETN (231 aa)) are insert-4. Residues 2320–2870 (NLVSGKLNFL…KKKIAKEGAF (551 aa)) form an insert-5 region. Residues 2972-3196 (SKSQRGWFHN…IGQLLRYGKE (225 aa)) are insert-6.

The protein belongs to the RNA polymerase beta' chain family. RpoC2 subfamily. In terms of assembly, in plastids the minimal PEP RNA polymerase catalytic core is composed of four subunits: alpha, beta, beta', and beta''. When a (nuclear-encoded) sigma factor is associated with the core the holoenzyme is formed, which can initiate transcription. The cofactor is Zn(2+).

It is found in the plastid. Its subcellular location is the chloroplast. It catalyses the reaction RNA(n) + a ribonucleoside 5'-triphosphate = RNA(n+1) + diphosphate. DNA-dependent RNA polymerase catalyzes the transcription of DNA into RNA using the four ribonucleoside triphosphates as substrates. The protein is DNA-directed RNA polymerase subunit beta'' of Tupiella akineta (Green alga).